The sequence spans 336 residues: Isopentenyl-diphosphate delta-isomerase (336 aa).

Residue 5–6 (RK) coordinates substrate. FMN-binding positions include 60–62 (AMT), Ser90, and Asn117. Gln147 is a binding site for substrate. Glu148 serves as a coordination point for Mg(2+). Residues Lys179, Ser204, Thr209, 253–255 (GVR), and 274–275 (SR) contribute to the FMN site.

Belongs to the IPP isomerase type 2 family. As to quaternary structure, homooctamer. Dimer of tetramers. It depends on FMN as a cofactor. The cofactor is NADPH. Mg(2+) is required as a cofactor.

It is found in the cytoplasm. It catalyses the reaction isopentenyl diphosphate = dimethylallyl diphosphate. Functionally, involved in the biosynthesis of isoprenoids. Catalyzes the 1,3-allylic rearrangement of the homoallylic substrate isopentenyl (IPP) to its allylic isomer, dimethylallyl diphosphate (DMAPP). This chain is Isopentenyl-diphosphate delta-isomerase, found in Streptococcus pneumoniae (strain ATCC BAA-255 / R6).